We begin with the raw amino-acid sequence, 469 residues long: UDP-N-acetylmuramoylalanine--D-glutamate ligase (469 aa).

Gly110 to Thr116 lines the ATP pocket.

It belongs to the MurCDEF family.

The protein localises to the cytoplasm. The catalysed reaction is UDP-N-acetyl-alpha-D-muramoyl-L-alanine + D-glutamate + ATP = UDP-N-acetyl-alpha-D-muramoyl-L-alanyl-D-glutamate + ADP + phosphate + H(+). It functions in the pathway cell wall biogenesis; peptidoglycan biosynthesis. Functionally, cell wall formation. Catalyzes the addition of glutamate to the nucleotide precursor UDP-N-acetylmuramoyl-L-alanine (UMA). This chain is UDP-N-acetylmuramoylalanine--D-glutamate ligase, found in Synechococcus sp. (strain JA-3-3Ab) (Cyanobacteria bacterium Yellowstone A-Prime).